Consider the following 313-residue polypeptide: Homoserine O-succinyltransferase (313 aa).

The active-site Acyl-thioester intermediate is cysteine 142. Residues lysine 163 and serine 192 each coordinate substrate. Residue histidine 235 is the Proton acceptor of the active site. Glutamate 237 is a catalytic residue. Substrate is bound at residue arginine 249.

Belongs to the MetA family.

It localises to the cytoplasm. The enzyme catalyses L-homoserine + succinyl-CoA = O-succinyl-L-homoserine + CoA. It functions in the pathway amino-acid biosynthesis; L-methionine biosynthesis via de novo pathway; O-succinyl-L-homoserine from L-homoserine: step 1/1. Its function is as follows. Transfers a succinyl group from succinyl-CoA to L-homoserine, forming succinyl-L-homoserine. The chain is Homoserine O-succinyltransferase from Shewanella sp. (strain ANA-3).